A 445-amino-acid polypeptide reads, in one-letter code: Exodeoxyribonuclease 7 large subunit (445 aa).

This sequence belongs to the XseA family. In terms of assembly, heterooligomer composed of large and small subunits.

It is found in the cytoplasm. The enzyme catalyses Exonucleolytic cleavage in either 5'- to 3'- or 3'- to 5'-direction to yield nucleoside 5'-phosphates.. Its function is as follows. Bidirectionally degrades single-stranded DNA into large acid-insoluble oligonucleotides, which are then degraded further into small acid-soluble oligonucleotides. The chain is Exodeoxyribonuclease 7 large subunit from Xanthomonas euvesicatoria pv. vesicatoria (strain 85-10) (Xanthomonas campestris pv. vesicatoria).